The primary structure comprises 114 residues: Large ribosomal subunit protein uL22 (114 aa).

The protein belongs to the universal ribosomal protein uL22 family. As to quaternary structure, part of the 50S ribosomal subunit.

In terms of biological role, this protein binds specifically to 23S rRNA; its binding is stimulated by other ribosomal proteins, e.g. L4, L17, and L20. It is important during the early stages of 50S assembly. It makes multiple contacts with different domains of the 23S rRNA in the assembled 50S subunit and ribosome. Functionally, the globular domain of the protein is located near the polypeptide exit tunnel on the outside of the subunit, while an extended beta-hairpin is found that lines the wall of the exit tunnel in the center of the 70S ribosome. This chain is Large ribosomal subunit protein uL22, found in Ehrlichia ruminantium (strain Gardel).